We begin with the raw amino-acid sequence, 185 residues long: Ribosome-recycling factor (185 aa).

The tract at residues 142-161 is disordered; it reads LVKDGEAGEDEGARAEKELD.

The protein belongs to the RRF family.

Its subcellular location is the cytoplasm. Functionally, responsible for the release of ribosomes from messenger RNA at the termination of protein biosynthesis. May increase the efficiency of translation by recycling ribosomes from one round of translation to another. The polypeptide is Ribosome-recycling factor (Paenarthrobacter aurescens (strain TC1)).